A 305-amino-acid polypeptide reads, in one-letter code: GTPase Era (305 aa).

Positions 9–176 (KSGFISIIGR…LDTLPKYLPE (168 aa)) constitute an Era-type G domain. Residues 17 to 24 (GRPNVGKS) form a G1 region. 17–24 (GRPNVGKS) is a binding site for GTP. The tract at residues 43–47 (QTTRN) is G2. The segment at 64–67 (DTPG) is G3. Residues 64-68 (DTPGI) and 126-129 (NKID) contribute to the GTP site. A G4 region spans residues 126–129 (NKID). The G5 stretch occupies residues 155-157 (ISA). The 80-residue stretch at 207-286 (TREEIPHSIA…YLELWVKVQK (80 aa)) folds into the KH type-2 domain.

It belongs to the TRAFAC class TrmE-Era-EngA-EngB-Septin-like GTPase superfamily. Era GTPase family. In terms of assembly, monomer.

It is found in the cytoplasm. The protein localises to the cell membrane. Its function is as follows. An essential GTPase that binds both GDP and GTP, with rapid nucleotide exchange. Plays a role in 16S rRNA processing and 30S ribosomal subunit biogenesis and possibly also in cell cycle regulation and energy metabolism. The sequence is that of GTPase Era from Lysinibacillus sphaericus (strain C3-41).